Reading from the N-terminus, the 388-residue chain is Succinyl-diaminopimelate desuccinylase (388 aa).

Residue His-75 coordinates Zn(2+). The active site involves Asp-77. Asp-108 provides a ligand contact to Zn(2+). Glu-142 (proton acceptor) is an active-site residue. Zn(2+) is bound by residues Glu-143, Glu-171, and His-361.

This sequence belongs to the peptidase M20A family. DapE subfamily. In terms of assembly, homodimer. Zn(2+) is required as a cofactor. The cofactor is Co(2+).

The catalysed reaction is N-succinyl-(2S,6S)-2,6-diaminopimelate + H2O = (2S,6S)-2,6-diaminopimelate + succinate. Its pathway is amino-acid biosynthesis; L-lysine biosynthesis via DAP pathway; LL-2,6-diaminopimelate from (S)-tetrahydrodipicolinate (succinylase route): step 3/3. Catalyzes the hydrolysis of N-succinyl-L,L-diaminopimelic acid (SDAP), forming succinate and LL-2,6-diaminopimelate (DAP), an intermediate involved in the bacterial biosynthesis of lysine and meso-diaminopimelic acid, an essential component of bacterial cell walls. The polypeptide is Succinyl-diaminopimelate desuccinylase (Methylocella silvestris (strain DSM 15510 / CIP 108128 / LMG 27833 / NCIMB 13906 / BL2)).